The sequence spans 503 residues: Long-chain-aldehyde dehydrogenase (503 aa).

Position 218–224 (218–224) interacts with NAD(+); that stretch reads GYGAEVG. Residues Glu262 and Cys301 contribute to the active site.

Belongs to the aldehyde dehydrogenase family. Homotetramer.

It catalyses the reaction a long-chain fatty aldehyde + NAD(+) + H2O = a long-chain fatty acid + NADH + 2 H(+). Completely inhibited by p-chloromercuribenzoate and N-ethylmaleimide. Strongly inhibited by iodoacetate. Inhibited by Pb(2+), Fe(3+), Ag(+) and Hg(2+) and partially inhibited by several other metal ions Mn(2+), Zn(2+) and Cu(2+). In terms of biological role, aldehyde dehydrogenase that shows activity toward n-alkanals (C(4) to C(14)), with a preference for longer carbon chains. The best substrate is tetradecanal. This Acinetobacter sp protein is Long-chain-aldehyde dehydrogenase (ald1).